The sequence spans 224 residues: 7-cyano-7-deazaguanine synthase (224 aa).

An ATP-binding site is contributed by 10–20 (VSGGLDSATVL). Positions 189, 199, 202, and 205 each coordinate Zn(2+).

The protein belongs to the QueC family. The cofactor is Zn(2+).

It carries out the reaction 7-carboxy-7-deazaguanine + NH4(+) + ATP = 7-cyano-7-deazaguanine + ADP + phosphate + H2O + H(+). Its pathway is purine metabolism; 7-cyano-7-deazaguanine biosynthesis. Catalyzes the ATP-dependent conversion of 7-carboxy-7-deazaguanine (CDG) to 7-cyano-7-deazaguanine (preQ(0)). This chain is 7-cyano-7-deazaguanine synthase, found in Nitrosococcus oceani (strain ATCC 19707 / BCRC 17464 / JCM 30415 / NCIMB 11848 / C-107).